The following is a 1136-amino-acid chain: Pesticidal crystal protein Cry4B protoxin (1136 aa).

Residues 84–282 (TPERVWNDFM…PADKIDNTKL (199 aa)) are domain I. Residues 283–466 (SKTEFTREIY…SNRVSFAWTH (184 aa)) are domain II. The interval 467 to 641 (KIVDPNNQIY…PITQSVLDET (175 aa)) is domain III.

This sequence belongs to the delta endotoxin family. As to quaternary structure, in the presence of micelles active toxin forms oligomers that can be fit into cryo-EM maps as trimers. Binds to host (A.gambiae) cadherin AgCad1 (also called BT-R3), probably on the cell surface. Activated toxin may bind its host AgCad1 receptor as a monomer, but also forms an oligomer that is not active. Mg(2+) is required as a cofactor. In terms of processing, treatment of recombinant protein with A.aegypti 3rd instar larvae midgut extract for 1 hour yields major bands of 72 and 45 kDa, the combined proteins are toxic to mosquitoes. Longer digestion, which removes the 72 kDa protein, yields a non-toxic preparation. Proteolysis by yields a 65 kDa toxic protein and 48 and 17 kDa fragments which are not toxic. In terms of tissue distribution, host (A.gambiae) larval midgut; binds to host brush border membranes, probably to cadherin-AgCad1 (Cad1, also called BT-R3).

It localises to the spore. Its activity is regulated as follows. Toxic activity on Trichoplusia ni insect cells stably transfected with the AgCad1/BT-R3 receptor leads to oncosis, cell death characterized by cell swelling, membrane blebbing and depletion of energy reserves. Cell death is blocked by EDTA (but not EGTA) and is partially prevented by pretreatment with NF449 (inhibits G-s-alpha-60A and adenylyl cyclase, AC) and 2',5'-dideoxyadenosine 3'-diphosphate (ddADP, inhibits AC), while H-89 and PKAI 14-22 (both inhibit protein kinase A), ouabain (inhibits Na+/K+-ATPase) and a cell exocytosis inhibitor (Exo1) nearly completely prevent the action of the toxin in this system. The cAMP analog pCPT-cAMP and the AC activator FSK enhance toxicity. A pesticidal protein active against Aedes and Anopheles mosquito species; activity on Culex species is strain dependent. It remains toxic to permethrin-resistant strains of A.gambiae. Following activation of the protoxin by mosquito larvae midgut extract (or by chymotrypsin or trypsin treatment) it becomes insecticidal. Causes mosquito cell death by activating a host G-protein-coupled receptor which subsequently activates adenylyl cyclase and increases cAMP production. cAMP activates protein kinase A which sets off a series of downstream events which includes increased exocytosis (probably bringing more receptor to the cell membrane), Na+/K+-ATPase activation and eventual host cell death. Another group suggests that alkaline phosphatase serves as the insect receptor and that the protein forms pores in insect cell membranes. The chain is Pesticidal crystal protein Cry4B protoxin from Bacillus thuringiensis subsp. israelensis.